The primary structure comprises 114 residues: Fluoride-specific ion channel FluC 1 (114 aa).

Helical transmembrane passes span 3–23 (IDIKNNTFFLISLGAFLGALF), 30–50 (IFIVNLIGCFLLGFFNSLNIL), 55–75 (LTLCVGLCGSMTTFSSWMSHL), and 87–107 (FLLNSLSIVLMGVLSIALGHI). Residues Gly63 and Thr66 each coordinate Na(+).

This sequence belongs to the fluoride channel Fluc/FEX (TC 1.A.43) family.

The protein localises to the cell inner membrane. The catalysed reaction is fluoride(in) = fluoride(out). With respect to regulation, na(+) is not transported, but it plays an essential structural role and its presence is essential for fluoride channel function. Its function is as follows. Fluoride-specific ion channel. Important for reducing fluoride concentration in the cell, thus reducing its toxicity. In Prochlorococcus marinus (strain NATL2A), this protein is Fluoride-specific ion channel FluC 1.